The sequence spans 335 residues: MATSISLTRYLVEQQRAGGLIPAQLRLLLEVVARACKSISHAVSKGALGDVLGTAGSENVQGEVQKKLDIIANGVLIEANEWGGHLAAMASEEMDGIYLVPHRYPQGEYLLLFDPLDGSSNIDVNVSIGTIFSVLRKPDGERRVEETDFLQPGTRQVAAGYCIYGPQTMLALTVGAGVALFTLDREQGSFVLTQENLRIPEETREFAINMSNMRHWAAPVKRYIDECLQGRSGPRGKDFNMRWVASMVADMHRILSRGGVFLYPWDRREPHKPGKLRLLYEANPMGWLVEQAGGAASNGRQRILEIQPTHLHERVSVILGSKNEVERVALYHGAR.

Residues Glu-92, Asp-114, Leu-116, and Asp-117 each coordinate Mg(2+). Residues 117–120 (DGSS), Asn-209, and Lys-275 contribute to the substrate site. Position 281 (Glu-281) interacts with Mg(2+).

Belongs to the FBPase class 1 family. As to quaternary structure, homotetramer. Requires Mg(2+) as cofactor.

The protein resides in the cytoplasm. The catalysed reaction is beta-D-fructose 1,6-bisphosphate + H2O = beta-D-fructose 6-phosphate + phosphate. Its pathway is carbohydrate biosynthesis; gluconeogenesis. The polypeptide is Fructose-1,6-bisphosphatase class 1 (Verminephrobacter eiseniae (strain EF01-2)).